The sequence spans 144 residues: 3-dehydroquinate dehydratase (144 aa).

Tyrosine 23 (proton acceptor) is an active-site residue. 3 residues coordinate substrate: asparagine 74, histidine 80, and aspartate 87. Histidine 101 (proton donor) is an active-site residue. Residues 102–103 (LS) and arginine 112 each bind substrate.

The protein belongs to the type-II 3-dehydroquinase family. In terms of assembly, homododecamer.

It carries out the reaction 3-dehydroquinate = 3-dehydroshikimate + H2O. The protein operates within metabolic intermediate biosynthesis; chorismate biosynthesis; chorismate from D-erythrose 4-phosphate and phosphoenolpyruvate: step 3/7. In terms of biological role, catalyzes a trans-dehydration via an enolate intermediate. In Mesorhizobium japonicum (strain LMG 29417 / CECT 9101 / MAFF 303099) (Mesorhizobium loti (strain MAFF 303099)), this protein is 3-dehydroquinate dehydratase.